Consider the following 445-residue polypeptide: Oxysterols receptor LXR-alpha (445 aa).

Disordered stretches follow at residues 1 to 34 (MSLWLEASMPDVSPDSATELWKTEPQDAGDQGGN) and 63 to 86 (ALLPRAETLPEPTELRPQKRKKGP). Residues 1–94 (MSLWLEASMP…GPAPKMLGNE (94 aa)) form a transactivation AF-1; required for ligand-independent transactivation function region. The segment at residues 93–168 (NELCSVCGDK…AGMREECVLS (76 aa)) is a DNA-binding region (nuclear receptor). 2 NR C4-type zinc fingers span residues 96–116 (CSVCGDKASGFHYNVLSCEGC) and 132–156 (CHSGGHCPMDTYMRRKCQECRLRKC). Serine 191 carries the post-translational modification Phosphoserine. The interval 203–445 (QLSPEQLGMI…LLSEIWDVHE (243 aa)) is transactivation AF-2; required for ligand-dependent transactivation function; mediates interaction with CCAR2. The region spanning 207-445 (EQLGMIEKLV…LLSEIWDVHE (239 aa)) is the NR LBD domain.

Belongs to the nuclear hormone receptor family. NR1 subfamily. In terms of assembly, heterodimer of NR1H3 and RXR (retinoic acid receptor). Interacts with CCAR2 (via N-terminus) in a ligand-independent manner. Interacts with SIRT1 and this interaction is inhibited by CCAR2. In terms of processing, ubiquitinated. Ubiquitination by UBR5 leads to its degradation: UBR5 specifically recognizes and binds ligand-bound NR1H3 when it is not associated with coactivators (NCOAs). In presence of NCOAs, the UBR5-degron is not accessible, preventing its ubiquitination and degradation.

The protein localises to the nucleus. The protein resides in the cytoplasm. Nuclear receptor that exhibits a ligand-dependent transcriptional activation activity. Interaction with retinoic acid receptor (RXR) shifts RXR from its role as a silent DNA-binding partner to an active ligand-binding subunit in mediating retinoid responses through target genes defined by LXRES. LXRES are DR4-type response elements characterized by direct repeats of two similar hexanuclotide half-sites spaced by four nucleotides. Plays an important role in the regulation of cholesterol homeostasis, regulating cholesterol uptake through MYLIP-dependent ubiquitination of LDLR, VLDLR and LRP8. Interplays functionally with RORA for the regulation of genes involved in liver metabolism. Induces LPCAT3-dependent phospholipid remodeling in endoplasmic reticulum (ER) membranes of hepatocytes, driving SREBF1 processing and lipogenesis. Via LPCAT3, triggers the incorporation of arachidonate into phosphatidylcholines of ER membranes, increasing membrane dynamics and enabling triacylglycerols transfer to nascent very low-density lipoprotein (VLDL) particles. Via LPCAT3 also counteracts lipid-induced ER stress response and inflammation, likely by modulating SRC kinase membrane compartmentalization and limiting the synthesis of lipid inflammatory mediators. The polypeptide is Oxysterols receptor LXR-alpha (Nr1h3) (Mus musculus (Mouse)).